The sequence spans 367 residues: Pyrimidine monooxygenase RutA (367 aa).

Residues 50–51 (IK), Asn116, Glu125, 141–142 (RY), and Ser191 each bind FMN.

The protein belongs to the NtaA/SnaA/DszA monooxygenase family. RutA subfamily.

It catalyses the reaction uracil + FMNH2 + NADH + O2 = (Z)-3-ureidoacrylate + FMN + NAD(+) + H2O + H(+). The enzyme catalyses thymine + FMNH2 + NADH + O2 = (Z)-2-methylureidoacrylate + FMN + NAD(+) + H2O + H(+). Its function is as follows. Catalyzes the pyrimidine ring opening between N-3 and C-4 by an unusual flavin hydroperoxide-catalyzed mechanism, adding oxygen atoms in the process to yield ureidoacrylate peracid, that immediately reacts with FMN forming ureidoacrylate and FMN-N(5)-oxide. The FMN-N(5)-oxide reacts spontaneously with NADH to produce FMN. Requires the flavin reductase RutF to regenerate FMN in vivo. This chain is Pyrimidine monooxygenase RutA, found in Allorhizobium ampelinum (strain ATCC BAA-846 / DSM 112012 / S4) (Agrobacterium vitis (strain S4)).